We begin with the raw amino-acid sequence, 461 residues long: L-seryl-tRNA(Sec) selenium transferase (461 aa).

An N6-(pyridoxal phosphate)lysine modification is found at K294.

This sequence belongs to the SelA family. Pyridoxal 5'-phosphate serves as cofactor.

It is found in the cytoplasm. It catalyses the reaction L-seryl-tRNA(Sec) + selenophosphate + H(+) = L-selenocysteinyl-tRNA(Sec) + phosphate. The protein operates within aminoacyl-tRNA biosynthesis; selenocysteinyl-tRNA(Sec) biosynthesis; selenocysteinyl-tRNA(Sec) from L-seryl-tRNA(Sec) (bacterial route): step 1/1. In terms of biological role, converts seryl-tRNA(Sec) to selenocysteinyl-tRNA(Sec) required for selenoprotein biosynthesis. This Haemophilus influenzae (strain 86-028NP) protein is L-seryl-tRNA(Sec) selenium transferase.